Reading from the N-terminus, the 289-residue chain is Oxaloacetate decarboxylase (289 aa).

S47 serves as a coordination point for substrate. D85 contributes to the Mg(2+) binding site. Positions 156 and 232 each coordinate substrate.

This sequence belongs to the isocitrate lyase/PEP mutase superfamily. Oxaloacetate decarboxylase family. Homotetramer; dimer of dimers. It depends on Mg(2+) as a cofactor.

The enzyme catalyses oxaloacetate + H(+) = pyruvate + CO2. Its function is as follows. Catalyzes the decarboxylation of oxaloacetate into pyruvate. Seems to play a role in maintaining cellular concentrations of bicarbonate and pyruvate. The polypeptide is Oxaloacetate decarboxylase (Rhodopseudomonas palustris (strain BisB5)).